A 374-amino-acid polypeptide reads, in one-letter code: Probable plastid-lipid-associated protein 3, chloroplastic (374 aa).

Residues 1–46 constitute a chloroplast transit peptide; sequence MAMPPPLFAAASHASLLLPSPTIHSSTGSRRPFRLPLRSSRRPPVA. The interval 19-148 is disordered; sequence PSPTIHSSTG…EDNEEERREE (130 aa). Over residues 28-54 the composition is skewed to low complexity; it reads GSRRPFRLPLRSSRRPPVAAAAASGVP. Composition is skewed to pro residues over residues 64–73 and 127–136; these read APEPPSQPDP and PAPPPPPPPV.

It belongs to the PAP/fibrillin family.

The protein resides in the plastid. The protein localises to the chloroplast. The sequence is that of Probable plastid-lipid-associated protein 3, chloroplastic (PAP3) from Oryza sativa subsp. japonica (Rice).